We begin with the raw amino-acid sequence, 358 residues long: 4-hydroxy-2-oxovalerate aldolase 2 (358 aa).

The Pyruvate carboxyltransferase domain maps to 16–268; sequence VLLHDMCLRD…ETGVDLFKLM (253 aa). Residue 24 to 25 participates in substrate binding; it reads RD. D25 lines the Mn(2+) pocket. The Proton acceptor role is filled by H28. The substrate site is built by S178 and H207. Residues H207 and H209 each contribute to the Mn(2+) site. Residue Y298 coordinates substrate.

This sequence belongs to the 4-hydroxy-2-oxovalerate aldolase family.

It carries out the reaction (S)-4-hydroxy-2-oxopentanoate = acetaldehyde + pyruvate. The sequence is that of 4-hydroxy-2-oxovalerate aldolase 2 from Methylibium petroleiphilum (strain ATCC BAA-1232 / LMG 22953 / PM1).